Consider the following 258-residue polypeptide: Imidazole glycerol phosphate synthase subunit HisF (258 aa).

Residues Asp11 and Asp130 contribute to the active site.

The protein belongs to the HisA/HisF family. As to quaternary structure, heterodimer of HisH and HisF.

Its subcellular location is the cytoplasm. It carries out the reaction 5-[(5-phospho-1-deoxy-D-ribulos-1-ylimino)methylamino]-1-(5-phospho-beta-D-ribosyl)imidazole-4-carboxamide + L-glutamine = D-erythro-1-(imidazol-4-yl)glycerol 3-phosphate + 5-amino-1-(5-phospho-beta-D-ribosyl)imidazole-4-carboxamide + L-glutamate + H(+). It participates in amino-acid biosynthesis; L-histidine biosynthesis; L-histidine from 5-phospho-alpha-D-ribose 1-diphosphate: step 5/9. Its function is as follows. IGPS catalyzes the conversion of PRFAR and glutamine to IGP, AICAR and glutamate. The HisF subunit catalyzes the cyclization activity that produces IGP and AICAR from PRFAR using the ammonia provided by the HisH subunit. This Shigella boydii serotype 18 (strain CDC 3083-94 / BS512) protein is Imidazole glycerol phosphate synthase subunit HisF.